Here is a 101-residue protein sequence, read N- to C-terminus: Small integral membrane protein 19 (101 aa).

A helical membrane pass occupies residues 25–43 (ATNVYLIVILVSIGLFMYA).

The protein belongs to the SMIM19 family.

It is found in the membrane. The protein is Small integral membrane protein 19 (smim19) of Xenopus tropicalis (Western clawed frog).